The chain runs to 699 residues: Elongation factor G (699 aa).

Positions 8–290 constitute a tr-type G domain; sequence ERYRNIGIMA…GVIEYLPSPV (283 aa). GTP-binding positions include 17-24, 88-92, and 142-145; these read AHIDAGKT, DTPGH, and NKMD.

It belongs to the TRAFAC class translation factor GTPase superfamily. Classic translation factor GTPase family. EF-G/EF-2 subfamily.

Its subcellular location is the cytoplasm. Catalyzes the GTP-dependent ribosomal translocation step during translation elongation. During this step, the ribosome changes from the pre-translocational (PRE) to the post-translocational (POST) state as the newly formed A-site-bound peptidyl-tRNA and P-site-bound deacylated tRNA move to the P and E sites, respectively. Catalyzes the coordinated movement of the two tRNA molecules, the mRNA and conformational changes in the ribosome. This is Elongation factor G from Alkalilimnicola ehrlichii (strain ATCC BAA-1101 / DSM 17681 / MLHE-1).